Here is a 270-residue protein sequence, read N- to C-terminus: 4-diphosphocytidyl-2-C-methyl-D-erythritol kinase (270 aa).

Lys-8 is a catalytic residue. 90–100 serves as a coordination point for ATP; it reads PIGAGLGGGSS. Asp-132 is an active-site residue.

Belongs to the GHMP kinase family. IspE subfamily.

The enzyme catalyses 4-CDP-2-C-methyl-D-erythritol + ATP = 4-CDP-2-C-methyl-D-erythritol 2-phosphate + ADP + H(+). It participates in isoprenoid biosynthesis; isopentenyl diphosphate biosynthesis via DXP pathway; isopentenyl diphosphate from 1-deoxy-D-xylulose 5-phosphate: step 3/6. Its function is as follows. Catalyzes the phosphorylation of the position 2 hydroxy group of 4-diphosphocytidyl-2C-methyl-D-erythritol. This is 4-diphosphocytidyl-2-C-methyl-D-erythritol kinase from Cytophaga hutchinsonii (strain ATCC 33406 / DSM 1761 / CIP 103989 / NBRC 15051 / NCIMB 9469 / D465).